The primary structure comprises 938 residues: Isoleucine--tRNA ligase (938 aa).

Residues 58–68 (PYANGNIHIGH) carry the 'HIGH' region motif. Glu-562 is a binding site for L-isoleucyl-5'-AMP. A 'KMSKS' region motif is present at residues 603–607 (KMSKS). Lys-606 is an ATP binding site. Zn(2+) contacts are provided by Cys-901, Cys-904, Cys-921, and Cys-924.

The protein belongs to the class-I aminoacyl-tRNA synthetase family. IleS type 1 subfamily. Monomer. Requires Zn(2+) as cofactor.

The protein localises to the cytoplasm. It catalyses the reaction tRNA(Ile) + L-isoleucine + ATP = L-isoleucyl-tRNA(Ile) + AMP + diphosphate. In terms of biological role, catalyzes the attachment of isoleucine to tRNA(Ile). As IleRS can inadvertently accommodate and process structurally similar amino acids such as valine, to avoid such errors it has two additional distinct tRNA(Ile)-dependent editing activities. One activity is designated as 'pretransfer' editing and involves the hydrolysis of activated Val-AMP. The other activity is designated 'posttransfer' editing and involves deacylation of mischarged Val-tRNA(Ile). The chain is Isoleucine--tRNA ligase from Actinobacillus pleuropneumoniae serotype 5b (strain L20).